Here is a 295-residue protein sequence, read N- to C-terminus: Probable peptidyl-prolyl cis-trans isomerase B (295 aa).

2 disordered regions span residues S105–V128 and I274–D295. The 169-residue stretch at A126–L294 folds into the PPIase cyclophilin-type domain.

Belongs to the cyclophilin-type PPIase family.

The enzyme catalyses [protein]-peptidylproline (omega=180) = [protein]-peptidylproline (omega=0). Its function is as follows. PPIases accelerate the folding of proteins. It catalyzes the cis-trans isomerization of proline imidic peptide bonds in oligopeptides. This Mycobacterium leprae (strain TN) protein is Probable peptidyl-prolyl cis-trans isomerase B (ppiB).